Consider the following 427-residue polypeptide: Histidinol dehydrogenase (427 aa).

Residues tyrosine 125, glutamine 186, and asparagine 209 each contribute to the NAD(+) site. Serine 234, glutamine 256, and histidine 259 together coordinate substrate. Glutamine 256 and histidine 259 together coordinate Zn(2+). Residues glutamate 325 and histidine 326 each act as proton acceptor in the active site. Substrate-binding residues include histidine 326, aspartate 359, glutamate 413, and histidine 419. Aspartate 359 serves as a coordination point for Zn(2+). Histidine 419 is a Zn(2+) binding site.

The protein belongs to the histidinol dehydrogenase family. Zn(2+) is required as a cofactor.

The catalysed reaction is L-histidinol + 2 NAD(+) + H2O = L-histidine + 2 NADH + 3 H(+). The protein operates within amino-acid biosynthesis; L-histidine biosynthesis; L-histidine from 5-phospho-alpha-D-ribose 1-diphosphate: step 9/9. In terms of biological role, catalyzes the sequential NAD-dependent oxidations of L-histidinol to L-histidinaldehyde and then to L-histidine. This is Histidinol dehydrogenase from Leptospira interrogans serogroup Icterohaemorrhagiae serovar Lai (strain 56601).